A 176-amino-acid chain; its full sequence is NAD(P)H-quinone oxidoreductase subunit 6, chloroplastic (176 aa).

5 helical membrane passes run Phe10–Pro30, Pro32–Leu52, Ala61–Leu81, Val95–Ile115, and Phe152–Ala172.

The protein belongs to the complex I subunit 6 family. In terms of assembly, NDH is composed of at least 16 different subunits, 5 of which are encoded in the nucleus.

The protein resides in the plastid. Its subcellular location is the chloroplast thylakoid membrane. It catalyses the reaction a plastoquinone + NADH + (n+1) H(+)(in) = a plastoquinol + NAD(+) + n H(+)(out). The enzyme catalyses a plastoquinone + NADPH + (n+1) H(+)(in) = a plastoquinol + NADP(+) + n H(+)(out). In terms of biological role, NDH shuttles electrons from NAD(P)H:plastoquinone, via FMN and iron-sulfur (Fe-S) centers, to quinones in the photosynthetic chain and possibly in a chloroplast respiratory chain. The immediate electron acceptor for the enzyme in this species is believed to be plastoquinone. Couples the redox reaction to proton translocation, and thus conserves the redox energy in a proton gradient. The polypeptide is NAD(P)H-quinone oxidoreductase subunit 6, chloroplastic (ndhG) (Trachelium caeruleum (Blue throatwort)).